The following is a 51-amino-acid chain: Putative antitoxin VapB6 (51 aa).

Its function is as follows. Antitoxin component of a possible type II toxin-antitoxin (TA) system. The cognate toxin is VapC6. This Mycobacterium tuberculosis (strain CDC 1551 / Oshkosh) protein is Putative antitoxin VapB6 (vapB6).